We begin with the raw amino-acid sequence, 348 residues long: S-adenosylmethionine:tRNA ribosyltransferase-isomerase (348 aa).

The protein belongs to the QueA family. As to quaternary structure, monomer.

Its subcellular location is the cytoplasm. It carries out the reaction 7-aminomethyl-7-carbaguanosine(34) in tRNA + S-adenosyl-L-methionine = epoxyqueuosine(34) in tRNA + adenine + L-methionine + 2 H(+). Its pathway is tRNA modification; tRNA-queuosine biosynthesis. Functionally, transfers and isomerizes the ribose moiety from AdoMet to the 7-aminomethyl group of 7-deazaguanine (preQ1-tRNA) to give epoxyqueuosine (oQ-tRNA). The protein is S-adenosylmethionine:tRNA ribosyltransferase-isomerase of Polynucleobacter asymbioticus (strain DSM 18221 / CIP 109841 / QLW-P1DMWA-1) (Polynucleobacter necessarius subsp. asymbioticus).